Here is a 340-residue protein sequence, read N- to C-terminus: Glycerol-3-phosphate dehydrogenase [NAD(P)+] (340 aa).

NADPH is bound by residues S14, F15, R35, and K108. Sn-glycerol 3-phosphate-binding residues include K108 and G136. A140 is an NADPH binding site. 5 residues coordinate sn-glycerol 3-phosphate: K191, D244, S254, R255, and N256. K191 (proton acceptor) is an active-site residue. R255 is an NADPH binding site. V279 and E281 together coordinate NADPH.

Belongs to the NAD-dependent glycerol-3-phosphate dehydrogenase family.

It is found in the cytoplasm. The enzyme catalyses sn-glycerol 3-phosphate + NAD(+) = dihydroxyacetone phosphate + NADH + H(+). It carries out the reaction sn-glycerol 3-phosphate + NADP(+) = dihydroxyacetone phosphate + NADPH + H(+). It participates in membrane lipid metabolism; glycerophospholipid metabolism. Functionally, catalyzes the reduction of the glycolytic intermediate dihydroxyacetone phosphate (DHAP) to sn-glycerol 3-phosphate (G3P), the key precursor for phospholipid synthesis. The polypeptide is Glycerol-3-phosphate dehydrogenase [NAD(P)+] (Azotobacter vinelandii (strain DJ / ATCC BAA-1303)).